Here is a 191-residue protein sequence, read N- to C-terminus: Large ribosomal subunit protein bL9 (191 aa).

A disordered region spans residues Glu149–Glu191. Over residues Phe179–Glu191 the composition is skewed to acidic residues.

The protein belongs to the bacterial ribosomal protein bL9 family.

Its function is as follows. Binds to the 23S rRNA. This is Large ribosomal subunit protein bL9 (rplI) from Agrobacterium fabrum (strain C58 / ATCC 33970) (Agrobacterium tumefaciens (strain C58)).